Here is a 425-residue protein sequence, read N- to C-terminus: MIDTKVLRANFQEVKAKLIPKGEDLSDFDKFEELDEKRRELIGKVEELKGKRNEVSQQVAVLKREKKDADHIIKEMREVGEEIKKLDEELRTVETTLETILLSIPNIPHDSVPVGETEDDNIEIRKWGEAPAFSYEPKPHWDIADHLNILDFERASKVTGSRFVFYKGLGARLERALYNFMLDLHVDEYDYTEVIPPYMVNRTSMTGTGQLPKFEEDAFKIREEDYFLIPTAEVPITNMHRDEILSGENLPINYAAFSACFRSEAGSAGRDTRGLIRQHQFNKVELVKFVKPEDSYEELEKLTNQAERVLQLLELPYRVMSMCTGDLGFTAAKKYDIEVWIPSQDTYREISSCSNFEAFQARRANIRFRREAKGKPEHVHTLNGSGLAVGRTVAAILENYQQEDGSVIIPKVLRPYMGNKEVIKP.

Residue Thr231–Glu233 participates in L-serine binding. Arg262–Glu264 is a binding site for ATP. Glu285 lines the L-serine pocket. Residue Glu349–Ser352 coordinates ATP. Ser385 lines the L-serine pocket.

This sequence belongs to the class-II aminoacyl-tRNA synthetase family. Type-1 seryl-tRNA synthetase subfamily. Homodimer. The tRNA molecule binds across the dimer.

It localises to the cytoplasm. It catalyses the reaction tRNA(Ser) + L-serine + ATP = L-seryl-tRNA(Ser) + AMP + diphosphate + H(+). The enzyme catalyses tRNA(Sec) + L-serine + ATP = L-seryl-tRNA(Sec) + AMP + diphosphate + H(+). Its pathway is aminoacyl-tRNA biosynthesis; selenocysteinyl-tRNA(Sec) biosynthesis; L-seryl-tRNA(Sec) from L-serine and tRNA(Sec): step 1/1. Its function is as follows. Catalyzes the attachment of serine to tRNA(Ser). Is also able to aminoacylate tRNA(Sec) with serine, to form the misacylated tRNA L-seryl-tRNA(Sec), which will be further converted into selenocysteinyl-tRNA(Sec). The polypeptide is Serine--tRNA ligase (Bacillus velezensis (strain DSM 23117 / BGSC 10A6 / LMG 26770 / FZB42) (Bacillus amyloliquefaciens subsp. plantarum)).